The sequence spans 251 residues: Metallo-beta-lactamase domain-containing protein 1 (251 aa).

H118, H120, D122, H123, H173, D196, and H235 together coordinate Zn(2+).

Belongs to the metallo-beta-lactamase superfamily. Glyoxalase II family. Homodimer. Zn(2+) is required as a cofactor.

The protein resides in the cytoplasm. It is found in the cytosol. It localises to the nucleus. It catalyses the reaction a ribonucleotidyl-ribonucleotide-RNA + H2O = a 3'-end ribonucleotide-RNA + a 5'-end 5'-phospho-ribonucleoside-RNA + H(+). Endoribonuclease that catalyzes the hydrolysis of histone-coding pre-mRNA 3'-end. Involved in histone pre-mRNA processing during the S-phase of the cell cycle, which is required for entering/progressing through S-phase. Cleaves histone pre-mRNA at a major and a minor cleavage site after the 5'-ACCCA-3' and the 5'-ACCCACA-3' sequence, respectively, and located downstream of the stem-loop. May require the presence of the HDE element located at the histone pre-RNA 3'-end to avoid non-specific cleavage. The chain is Metallo-beta-lactamase domain-containing protein 1 (Mblac1) from Rattus norvegicus (Rat).